A 1152-amino-acid polypeptide reads, in one-letter code: Fork-head transcriptional regulator FHL1 (1152 aa).

Positions 55–147 are disordered; sequence TATNNVLPES…SEDDNNNNNN (93 aa). Basic and acidic residues predominate over residues 64–83; that stretch reads SNKKDKPIDTQDLHEDDPKA. Residues 87 to 101 are compositionally biased toward low complexity; that stretch reads TTSNGESTSNSNSVS. The span at 126 to 135 shows a compositional bias: polar residues; sequence VPVTSNSKSL. One can recognise an FHA domain in the interval 171–229; that stretch reads VVLGRKSNDETLQQNVDVHLSSKKAISRRHAKIFYNFGTQRFEISILGRNGAFVDNVFV. Disordered regions lie at residues 254-362 and 514-557; these read LPSN…RKNS and KKQL…PPAS. The span at 271–286 shows a compositional bias: polar residues; sequence KQFNPSDAINLRSNLY. Over residues 296–307 the composition is skewed to basic residues; that stretch reads PKRKPQPSKKVK. A compositionally biased stretch (low complexity) spans 328–358; the sequence is TTAISPTASISTSTNAATAATATTPATTTAA. Coiled coils occupy residues 449–537 and 734–777; these read DDDE…SLAK and ELYI…QKSL. The fork-head DNA-binding region spans 659–756; that stretch reads KPNISFQIMI…QREIAKAKAK (98 aa). 4 disordered regions span residues 787 to 833, 846 to 867, 951 to 1010, and 1057 to 1152; these read ASPY…GTSP, RGNG…MNDP, HEGI…VPQQ, and PAMQ…AKTE. Composition is skewed to low complexity over residues 804 to 826, 851 to 863, and 973 to 987; these read SQSS…GSTT, TPAT…SLPA, and TTTS…TTPQ. Pro residues-rich tracts occupy residues 996 to 1006 and 1072 to 1082; these read VKPPISTPLPQ and TSVPVPLPVPS. Composition is skewed to polar residues over residues 1115–1128 and 1143–1152; these read SSLS…SNKP and QATNKIAKTE.

In terms of assembly, interacts with IFH1 and TBF1.

It is found in the nucleus. Functionally, in complex with IFH1, acts as a transcriptional regulator of rRNA and ribosomal protein genes. The FHL1-IFH1 complex is targeted to the ribosomal protein genes by the DNA-binding factor TBF1. This chain is Fork-head transcriptional regulator FHL1 (FHL1), found in Candida albicans (strain SC5314 / ATCC MYA-2876) (Yeast).